Here is a 110-residue protein sequence, read N- to C-terminus: UPF0060 membrane protein Rpic_4131 (110 aa).

The next 4 membrane-spanning stretches (helical) occupy residues 8 to 28 (VLFAFTAVAEIVGCYLPWLVL), 33 to 53 (PFWLLLPAAASLALFAWLLTL), 65 to 85 (YGGVYIAVALVWLRLVDGVAL), and 88 to 108 (WDVGGAAIALTGMAVIALQPQ).

Belongs to the UPF0060 family.

The protein localises to the cell inner membrane. The polypeptide is UPF0060 membrane protein Rpic_4131 (Ralstonia pickettii (strain 12J)).